We begin with the raw amino-acid sequence, 181 residues long: Oligoribonuclease (181 aa).

The Exonuclease domain occupies 8-171; sequence LIWIDLEMTG…DDIRESVAEL (164 aa). Residue Y129 is part of the active site.

The protein belongs to the oligoribonuclease family.

Its subcellular location is the cytoplasm. 3'-to-5' exoribonuclease specific for small oligoribonucleotides. The chain is Oligoribonuclease from Yersinia pseudotuberculosis serotype O:1b (strain IP 31758).